The following is a 96-amino-acid chain: UPF0235 protein KPK_0722 (96 aa).

This sequence belongs to the UPF0235 family.

This is UPF0235 protein KPK_0722 from Klebsiella pneumoniae (strain 342).